Reading from the N-terminus, the 314-residue chain is Endolytic peptidoglycan transglycosylase RlpA (314 aa).

Positions 1-19 are cleaved as a signal peptide; that stretch reads MGWALKKVCFLGVIFLISA. A lipid anchor (N-palmitoyl cysteine) is attached at C20. Residue C20 is the site of S-diacylglycerol cysteine attachment. In terms of domain architecture, SPOR spans 241–314; it reads SVSGGKFSLQ…YNQNAVLTRE (74 aa).

It belongs to the RlpA family.

It localises to the cell membrane. Lytic transglycosylase with a strong preference for naked glycan strands that lack stem peptides. In Helicobacter pylori (strain J99 / ATCC 700824) (Campylobacter pylori J99), this protein is Endolytic peptidoglycan transglycosylase RlpA.